Here is a 195-residue protein sequence, read N- to C-terminus: Dephospho-CoA kinase (195 aa).

The region spanning Ile-4 to Leu-195 is the DPCK domain. An ATP-binding site is contributed by Ala-12–Thr-17.

It belongs to the CoaE family.

It is found in the cytoplasm. It carries out the reaction 3'-dephospho-CoA + ATP = ADP + CoA + H(+). It functions in the pathway cofactor biosynthesis; coenzyme A biosynthesis; CoA from (R)-pantothenate: step 5/5. Functionally, catalyzes the phosphorylation of the 3'-hydroxyl group of dephosphocoenzyme A to form coenzyme A. The chain is Dephospho-CoA kinase from Streptococcus agalactiae serotype III (strain NEM316).